Here is a 239-residue protein sequence, read N- to C-terminus: Thymidylate kinase (239 aa).

10–17 (GVNRVGKS) contacts ATP.

Belongs to the thymidylate kinase family.

It catalyses the reaction dTMP + ATP = dTDP + ADP. The protein operates within pyrimidine metabolism; dTTP biosynthesis. Catalyzes the conversion of dTMP to dTDP. The polypeptide is Thymidylate kinase (TMK) (African swine fever virus (isolate Tick/South Africa/Pretoriuskop Pr4/1996) (ASFV)).